The chain runs to 942 residues: Homeobox protein 2 (942 aa).

2 stretches are compositionally biased toward low complexity: residues 32–87 and 98–130; these read ECNE…NINE and SPYSSPSSSISSPSRSPSPNSPASSSPIHSPIP. Disordered regions lie at residues 32–149, 161–494, 537–580, and 609–942; these read ECNE…PQNI, LESP…RLKK, RQEK…QGGA, and FKNN…CQQN. The span at 131–149 shows a compositional bias: polar residues; sequence NTNFKQSGEYQSIPSPQNI. Low complexity predominate over residues 163–261; that stretch reads SPNSSNSSPS…PSSNLSKSNS (99 aa). The span at 269-290 shows a compositional bias: polar residues; sequence QAPSNTSSPQLLSPNHNQQRIS. Low complexity-rich tracts occupy residues 299-430 and 450-464; these read NNNH…NSSP and NNNNNNNNNNNSNSS. Positions 465–481 are enriched in polar residues; it reads FDEYQPQQKVSRSNSPN. A DNA-binding region (homeobox) is located at residues 485 to 544; it reads EKKRRTRLKKEQADILKTFFDNDDYPTKDDKETLANRLGMSYCAVTTWFSNKRQEKKRRG. 6 stretches are compositionally biased toward low complexity: residues 609–621, 628–685, 694–737, 752–764, 776–864, and 890–927; these read FKNNNMDNNNKNV, NNNN…GSSD, NNNN…NNNN, NNNNNNNNNNNNN, SDDT…YLNN, and NNFNGDNNNNNNNKNNNNNNQNNNGNGNNNNNNNNDNN. Residues 835 to 865 are a coiled coil; the sequence is NNNNNNNNQNNNNNNNNNQYNNNNKNYLNNI.

It localises to the nucleus. Its function is as follows. Putative transcription factor that may potentiate the function of warA. In Dictyostelium discoideum (Social amoeba), this protein is Homeobox protein 2 (hbx2).